We begin with the raw amino-acid sequence, 105 residues long: Nucleoid-associated protein TTHA1599 (105 aa).

The protein belongs to the YbaB/EbfC family. Homodimer.

It is found in the cytoplasm. Its subcellular location is the nucleoid. Its function is as follows. Binds to DNA and alters its conformation. May be involved in regulation of gene expression, nucleoid organization and DNA protection. The sequence is that of Nucleoid-associated protein TTHA1599 from Thermus thermophilus (strain ATCC 27634 / DSM 579 / HB8).